Reading from the N-terminus, the 280-residue chain is Succinate dehydrogenase [ubiquinone] iron-sulfur subunit, mitochondrial (280 aa).

The N-terminal 28 residues, 1–28 (MAAVVALSLRRRLPATTLGGACLQASRG), are a transit peptide targeting the mitochondrion. One can recognise a 2Fe-2S ferredoxin-type domain in the interval 40–133 (KKFAIYRWDP…VSKIYPLPHM (94 aa)). N6-acetyllysine occurs at positions 51 and 55. [2Fe-2S] cluster contacts are provided by cysteine 93, cysteine 98, cysteine 101, and cysteine 113. The tract at residues 146 to 218 (FYAQYKSIEP…PAVLMQAYRW (73 aa)) is interaction with SDHAF1. One can recognise a 4Fe-4S ferredoxin-type domain in the interval 176–206 (EREKLDGLYECILCACCSTSCPSYWWNGDKY). [4Fe-4S] cluster-binding residues include cysteine 186, cysteine 189, and cysteine 192. Residue cysteine 196 participates in [3Fe-4S] cluster binding. Tryptophan 201 provides a ligand contact to a ubiquinone. The [3Fe-4S] cluster site is built by cysteine 243 and cysteine 249. Residue cysteine 253 participates in [4Fe-4S] cluster binding.

This sequence belongs to the succinate dehydrogenase/fumarate reductase iron-sulfur protein family. Component of complex II composed of four subunits: the flavoprotein (FP) SDHA, iron-sulfur protein (IP) SDHB, and a cytochrome b560 composed of SDHC and SDHD. Interacts with SDHAF1; the interaction is required for iron-sulfur cluster incorporation into SDHB. In terms of assembly, (Microbial infection) Interacts with JC virus small t antigen. [2Fe-2S] cluster serves as cofactor. The cofactor is [3Fe-4S] cluster. [4Fe-4S] cluster is required as a cofactor.

The protein localises to the mitochondrion inner membrane. The enzyme catalyses a quinone + succinate = fumarate + a quinol. It catalyses the reaction (R)-malate + a quinone = enol-oxaloacetate + a quinol. The catalysed reaction is (S)-malate + a quinone = enol-oxaloacetate + a quinol. The protein operates within carbohydrate metabolism; tricarboxylic acid cycle; fumarate from succinate (eukaryal route): step 1/1. Its activity is regulated as follows. Enol-oxaloacetate inhibits the succinate dehydrogenase activity. In terms of biological role, iron-sulfur protein (IP) subunit of the succinate dehydrogenase complex (mitochondrial respiratory chain complex II), responsible for transferring electrons from succinate to ubiquinone (coenzyme Q). SDH also oxidizes malate to the non-canonical enol form of oxaloacetate, enol-oxaloacetate. Enol-oxaloacetate, which is a potent inhibitor of the succinate dehydrogenase activity, is further isomerized into keto-oxaloacetate. In Homo sapiens (Human), this protein is Succinate dehydrogenase [ubiquinone] iron-sulfur subunit, mitochondrial (SDHB).